We begin with the raw amino-acid sequence, 317 residues long: Transaldolase (317 aa).

The active-site Schiff-base intermediate with substrate is the Lys-132.

It belongs to the transaldolase family. Type 1 subfamily. As to quaternary structure, homodimer.

The protein resides in the cytoplasm. The catalysed reaction is D-sedoheptulose 7-phosphate + D-glyceraldehyde 3-phosphate = D-erythrose 4-phosphate + beta-D-fructose 6-phosphate. It functions in the pathway carbohydrate degradation; pentose phosphate pathway; D-glyceraldehyde 3-phosphate and beta-D-fructose 6-phosphate from D-ribose 5-phosphate and D-xylulose 5-phosphate (non-oxidative stage): step 2/3. Its function is as follows. Transaldolase is important for the balance of metabolites in the pentose-phosphate pathway. This is Transaldolase from Edwardsiella ictaluri (strain 93-146).